The following is a 263-amino-acid chain: L-histidine 2-aminobutanoyltransferase (263 aa).

It belongs to the methyltransferase superfamily. CntL family.

The enzyme catalyses L-histidine + S-adenosyl-L-methionine = (2S)-2-amino-4-{[(1S)-1-carboxy-2-(1H-imidazol-4-yl)ethyl]amino}butanoate + S-methyl-5'-thioadenosine + H(+). Its function is as follows. Catalyzes the nucleophilic attack of one alpha-aminobutanoate moiety from SAM onto L-histidine to produce the intermediate (2S)-2-amino-4-{[(1S)-1-carboxy-2-(1H-imidazol-4-yl)ethyl]amino}butanoate. Functions in the biosynthesis of the metallophore pseudopaline, which is involved in the acquisition of nickel and zinc, and thus enables bacterial growth inside the host, where metal access is limited. Therefore, this enzyme probably contributes to Pseudomonas virulence. Appears to be specific for L-histidine as substrate. This is L-histidine 2-aminobutanoyltransferase from Pseudomonas aeruginosa (strain ATCC 15692 / DSM 22644 / CIP 104116 / JCM 14847 / LMG 12228 / 1C / PRS 101 / PAO1).